We begin with the raw amino-acid sequence, 90 residues long: Sec-independent protein translocase protein TatAo (90 aa).

The helical transmembrane segment at 8–28 (FPGLPGGPELLIVLLIVVLLF) threads the bilayer. A disordered region spans residues 39-90 (SSGQAMGEFRRGREEIEEELKKGAEGGDDEGENGDEAEADDADATETEAESR). The span at 46 to 63 (EFRRGREEIEEELKKGAE) shows a compositional bias: basic and acidic residues. Positions 64–90 (GGDDEGENGDEAEADDADATETEAESR) are enriched in acidic residues.

Belongs to the TatA/E family. Forms a complex with TatC. Cytoplasmic and membrane-bound TatA form high-molecular-weight complexes.

The protein resides in the cell membrane. The protein localises to the cytoplasm. Part of the twin-arginine translocation (Tat) system that transports large folded proteins containing a characteristic twin-arginine motif in their signal peptide across membranes. TatA could form the protein-conducting channel of the Tat system. The protein is Sec-independent protein translocase protein TatAo of Haloferax volcanii (strain ATCC 29605 / DSM 3757 / JCM 8879 / NBRC 14742 / NCIMB 2012 / VKM B-1768 / DS2) (Halobacterium volcanii).